We begin with the raw amino-acid sequence, 506 residues long: RNA-splicing ligase RtcB homolog 1 (506 aa).

Mn(2+) contacts are provided by Asp120, Cys123, His228, His260, and His354. Residue Asn227–Glu231 coordinates GMP. GMP is bound by residues His354 to Asn355, Gly403 to Met406, Ser410, His429 to Gly432, and Lys505. Residue His429 is the GMP-histidine intermediate of the active site.

It belongs to the RtcB family. In terms of assembly, catalytic component of the tRNA-splicing ligase complex. The cofactor is Mn(2+).

The catalysed reaction is a 3'-end 3'-phospho-ribonucleotide-RNA + a 5'-end dephospho-ribonucleoside-RNA + GTP = a ribonucleotidyl-ribonucleotide-RNA + GMP + diphosphate. It catalyses the reaction a 3'-end 2',3'-cyclophospho-ribonucleotide-RNA + a 5'-end dephospho-ribonucleoside-RNA + GTP + H2O = a ribonucleotidyl-ribonucleotide-RNA + GMP + diphosphate + H(+). Its function is as follows. Catalytic subunit of the tRNA-splicing ligase complex that acts by directly joining spliced tRNA halves to mature-sized tRNAs by incorporating the precursor-derived splice junction phosphate into the mature tRNA as a canonical 3',5'-phosphodiester. May act as an RNA ligase with broad substrate specificity, and may function toward other RNAs. The protein is RNA-splicing ligase RtcB homolog 1 of Culex quinquefasciatus (Southern house mosquito).